A 357-amino-acid polypeptide reads, in one-letter code: Meiotically up-regulated gene 135 protein (357 aa).

It belongs to the UPF0612 family.

The protein resides in the nucleus. Functionally, has a role in meiosis. This Schizosaccharomyces pombe (strain 972 / ATCC 24843) (Fission yeast) protein is Meiotically up-regulated gene 135 protein (mug135).